Reading from the N-terminus, the 60-residue chain is Large ribosomal subunit protein uL30 (60 aa).

This sequence belongs to the universal ribosomal protein uL30 family. In terms of assembly, part of the 50S ribosomal subunit.

This Streptococcus mutans serotype c (strain ATCC 700610 / UA159) protein is Large ribosomal subunit protein uL30.